The primary structure comprises 277 residues: Large ribosomal subunit protein uL2 (277 aa).

Disordered regions lie at residues 32-58 and 225-277; these read KSLTKGKKFKSGRDSSGRISIRRRGGG and VAMN…RRNK. Residues 258-277 show a composition bias toward basic residues; that stretch reads YKTRKKKRYSDKFIIKRRNK.

Belongs to the universal ribosomal protein uL2 family. Part of the 50S ribosomal subunit. Forms a bridge to the 30S subunit in the 70S ribosome.

In terms of biological role, one of the primary rRNA binding proteins. Required for association of the 30S and 50S subunits to form the 70S ribosome, for tRNA binding and peptide bond formation. It has been suggested to have peptidyltransferase activity; this is somewhat controversial. Makes several contacts with the 16S rRNA in the 70S ribosome. This is Large ribosomal subunit protein uL2 from Borreliella burgdorferi (strain ATCC 35210 / DSM 4680 / CIP 102532 / B31) (Borrelia burgdorferi).